Reading from the N-terminus, the 132-residue chain is Ribosome-binding factor A (132 aa).

The protein belongs to the RbfA family. Monomer. Binds 30S ribosomal subunits, but not 50S ribosomal subunits or 70S ribosomes.

The protein localises to the cytoplasm. One of several proteins that assist in the late maturation steps of the functional core of the 30S ribosomal subunit. Associates with free 30S ribosomal subunits (but not with 30S subunits that are part of 70S ribosomes or polysomes). Required for efficient processing of 16S rRNA. May interact with the 5'-terminal helix region of 16S rRNA. This is Ribosome-binding factor A from Pseudomonas putida (strain W619).